A 639-amino-acid polypeptide reads, in one-letter code: Collagen alpha-1(XII) chain (639 aa).

The region spanning 1–114 (CRKSLLQAVA…DSLSKIVDDL (114 aa)) is the VWFA domain. Fibronectin type-III domains are found at residues 130 to 219 (APSN…LPVP), 220 to 310 (IVSL…LPLP), 311 to 401 (RPQD…VPAP), 402 to 490 (TNLR…SPKS), 491 to 585 (GPRN…TVRN), and 586 to 639 (LRVY…LRNL). Residues 473 to 496 (DESESDDLTGSERTSPKSGPRNLQ) form a disordered region.

It belongs to the fibril-associated collagens with interrupted helices (FACIT) family. In terms of assembly, trimer of identical chains each containing 190 kDa of non-triple-helical sequences. Post-translationally, the triple-helical tail is stabilized by disulfide bonds at each end. Prolines at the third position of the tripeptide repeating unit (G-X-Y) are hydroxylated in some or all of the chains. In terms of processing, O-glycosylated; glycosaminoglycan of chondroitin-sulfate type.

Its subcellular location is the secreted. It localises to the extracellular space. The protein resides in the extracellular matrix. Its function is as follows. Type XII collagen interacts with type I collagen-containing fibrils, the COL1 domain could be associated with the surface of the fibrils, and the COL2 and NC3 domains may be localized in the perifibrillar matrix. The sequence is that of Collagen alpha-1(XII) chain (COL12A1) from Oryctolagus cuniculus (Rabbit).